Here is a 152-residue protein sequence, read N- to C-terminus: Ribosome maturation factor RimP (152 aa).

The protein belongs to the RimP family.

The protein resides in the cytoplasm. Functionally, required for maturation of 30S ribosomal subunits. This Pseudoalteromonas atlantica (strain T6c / ATCC BAA-1087) protein is Ribosome maturation factor RimP.